Consider the following 201-residue polypeptide: FMN-dependent NADH:quinone oxidoreductase (201 aa).

FMN-binding positions include Ser-10, Ser-16 to Ser-18, Met-95 to Phe-98, and Thr-139 to Gly-142.

Belongs to the azoreductase type 1 family. As to quaternary structure, homodimer. The cofactor is FMN.

It catalyses the reaction 2 a quinone + NADH + H(+) = 2 a 1,4-benzosemiquinone + NAD(+). The catalysed reaction is N,N-dimethyl-1,4-phenylenediamine + anthranilate + 2 NAD(+) = 2-(4-dimethylaminophenyl)diazenylbenzoate + 2 NADH + 2 H(+). Functionally, quinone reductase that provides resistance to thiol-specific stress caused by electrophilic quinones. In terms of biological role, also exhibits azoreductase activity. Catalyzes the reductive cleavage of the azo bond in aromatic azo compounds to the corresponding amines. The protein is FMN-dependent NADH:quinone oxidoreductase of Tolumonas auensis (strain DSM 9187 / NBRC 110442 / TA 4).